A 921-amino-acid chain; its full sequence is Probable serine/threonine-protein kinase DDB_G0275165 (921 aa).

The Protein kinase domain maps to 23–277; the sequence is FDPLSIIGSG…SNILGLLEYI (255 aa). Residues 29 to 37 and Lys-50 each bind ATP; that span reads IGSGGFGKV. Asp-147 serves as the catalytic Proton acceptor. Disordered stretches follow at residues 289–453, 465–492, 530–571, 583–653, 671–698, 737–813, 833–858, and 877–921; these read DYEP…SFPR, RGEE…NEED, RPWN…SDSN, NPTP…PTTI, STAT…SNNN, IQPL…SRSL, SSQQ…TSQF, and FEKS…KPKK. Composition is skewed to low complexity over residues 310-352, 400-412, and 429-445; these read NNNN…NNNN, SNIN…NNSN, and NING…NNNN. Composition is skewed to low complexity over residues 539-550 and 583-638; these read NNNNKNNNNNEK and NPTP…SLSS. Positions 643-653 are enriched in polar residues; that stretch reads PQSTYKVPTTI. Composition is skewed to low complexity over residues 748-775, 842-857, and 892-910; these read TVAA…PTST, QPSS…PTSQ, and TSSS…PSSP.

It belongs to the protein kinase superfamily. TKL Ser/Thr protein kinase family.

The catalysed reaction is L-seryl-[protein] + ATP = O-phospho-L-seryl-[protein] + ADP + H(+). It catalyses the reaction L-threonyl-[protein] + ATP = O-phospho-L-threonyl-[protein] + ADP + H(+). The sequence is that of Probable serine/threonine-protein kinase DDB_G0275165 from Dictyostelium discoideum (Social amoeba).